Consider the following 526-residue polypeptide: GMP synthase [glutamine-hydrolyzing] (526 aa).

The region spanning 3 to 199 is the Glutamine amidotransferase type-1 domain; sequence RVAIIDFGSQ…FVRIAGCDNN (197 aa). Catalysis depends on cysteine 83, which acts as the Nucleophile. Catalysis depends on residues histidine 174 and glutamate 176. The 193-residue stretch at 200-392 folds into the GMPS ATP-PPase domain; it reads WTVESFLDEQ…LGISDEILMR (193 aa). 227–233 lines the ATP pocket; that stretch reads SGGVDSS.

In terms of assembly, homodimer.

The enzyme catalyses XMP + L-glutamine + ATP + H2O = GMP + L-glutamate + AMP + diphosphate + 2 H(+). Its pathway is purine metabolism; GMP biosynthesis; GMP from XMP (L-Gln route): step 1/1. Catalyzes the synthesis of GMP from XMP. This is GMP synthase [glutamine-hydrolyzing] from Ehrlichia chaffeensis (strain ATCC CRL-10679 / Arkansas).